We begin with the raw amino-acid sequence, 243 residues long: 7-cyano-7-deazaguanine synthase (243 aa).

18–28 (FSGGQDSATCL) is an ATP binding site. 4 residues coordinate Zn(2+): Cys206, Cys221, Cys224, and Cys227.

The protein belongs to the QueC family. Zn(2+) serves as cofactor.

It catalyses the reaction 7-carboxy-7-deazaguanine + NH4(+) + ATP = 7-cyano-7-deazaguanine + ADP + phosphate + H2O + H(+). It functions in the pathway purine metabolism; 7-cyano-7-deazaguanine biosynthesis. Catalyzes the ATP-dependent conversion of 7-carboxy-7-deazaguanine (CDG) to 7-cyano-7-deazaguanine (preQ(0)). The protein is 7-cyano-7-deazaguanine synthase of Methylorubrum extorquens (strain PA1) (Methylobacterium extorquens).